The sequence spans 595 residues: Chaperone protein HscA homolog (595 aa).

The protein belongs to the heat shock protein 70 family.

Chaperone involved in the maturation of iron-sulfur cluster-containing proteins. Has a low intrinsic ATPase activity which is markedly stimulated by HscB. The sequence is that of Chaperone protein HscA homolog from Rickettsia conorii (strain ATCC VR-613 / Malish 7).